Here is a 175-residue protein sequence, read N- to C-terminus: Large ribosomal subunit protein uL10 (175 aa).

It belongs to the universal ribosomal protein uL10 family. Part of the ribosomal stalk of the 50S ribosomal subunit. The N-terminus interacts with L11 and the large rRNA to form the base of the stalk. The C-terminus forms an elongated spine to which L12 dimers bind in a sequential fashion forming a multimeric L10(L12)X complex.

Functionally, forms part of the ribosomal stalk, playing a central role in the interaction of the ribosome with GTP-bound translation factors. This Thermobifida fusca (strain YX) protein is Large ribosomal subunit protein uL10.